The chain runs to 298 residues: HTH-type transcriptional regulator ArgP (298 aa).

Residues 4-60 form the HTH lysR-type domain; that stretch reads LDYKWIEALDAVVYQGSFERAAEHLFVSQSAISQRIKQLEKFLAQPVLIREQPPKPT. Positions 21-40 form a DNA-binding region, H-T-H motif; sequence FERAAEHLFVSQSAISQRIK.

This sequence belongs to the LysR transcriptional regulatory family. In terms of assembly, homodimer.

Functionally, controls the transcription of genes involved in arginine and lysine metabolism. This chain is HTH-type transcriptional regulator ArgP, found in Vibrio parahaemolyticus serotype O3:K6 (strain RIMD 2210633).